Consider the following 284-residue polypeptide: Neutral protease 2 homolog AFLA_119780 (284 aa).

Cystine bridges form between Cys-113/Cys-185 and Cys-192/Cys-210. His-235 is a Zn(2+) binding site. The active site involves Glu-236. 2 residues coordinate Zn(2+): His-239 and Asp-250.

It belongs to the peptidase M35 family. Zn(2+) is required as a cofactor.

The protein localises to the secreted. The enzyme catalyses Preferential cleavage of bonds with hydrophobic residues in P1'. Also 3-Asn-|-Gln-4 and 8-Gly-|-Ser-9 bonds in insulin B chain.. In terms of biological role, secreted metalloproteinase that allows assimilation of proteinaceous substrates. Shows high activities on basic nuclear substrates such as histone and protamine. This is Neutral protease 2 homolog AFLA_119780 from Aspergillus flavus (strain ATCC 200026 / FGSC A1120 / IAM 13836 / NRRL 3357 / JCM 12722 / SRRC 167).